Here is a 264-residue protein sequence, read N- to C-terminus: Tryptophan synthase alpha chain (264 aa).

Residues E49 and D60 each act as proton acceptor in the active site.

It belongs to the TrpA family. As to quaternary structure, tetramer of two alpha and two beta chains.

The catalysed reaction is (1S,2R)-1-C-(indol-3-yl)glycerol 3-phosphate + L-serine = D-glyceraldehyde 3-phosphate + L-tryptophan + H2O. The protein operates within amino-acid biosynthesis; L-tryptophan biosynthesis; L-tryptophan from chorismate: step 5/5. In terms of biological role, the alpha subunit is responsible for the aldol cleavage of indoleglycerol phosphate to indole and glyceraldehyde 3-phosphate. This Microcystis aeruginosa (strain NIES-843 / IAM M-2473) protein is Tryptophan synthase alpha chain.